The sequence spans 244 residues: Ubiquinone/menaquinone biosynthesis C-methyltransferase UbiE (244 aa).

S-adenosyl-L-methionine contacts are provided by residues Thr70, Asp91, and Asp117–Ala118.

Belongs to the class I-like SAM-binding methyltransferase superfamily. MenG/UbiE family.

It catalyses the reaction a 2-demethylmenaquinol + S-adenosyl-L-methionine = a menaquinol + S-adenosyl-L-homocysteine + H(+). The catalysed reaction is a 2-methoxy-6-(all-trans-polyprenyl)benzene-1,4-diol + S-adenosyl-L-methionine = a 5-methoxy-2-methyl-3-(all-trans-polyprenyl)benzene-1,4-diol + S-adenosyl-L-homocysteine + H(+). The protein operates within quinol/quinone metabolism; menaquinone biosynthesis; menaquinol from 1,4-dihydroxy-2-naphthoate: step 2/2. It functions in the pathway cofactor biosynthesis; ubiquinone biosynthesis. In terms of biological role, methyltransferase required for the conversion of demethylmenaquinol (DMKH2) to menaquinol (MKH2) and the conversion of 2-polyprenyl-6-methoxy-1,4-benzoquinol (DDMQH2) to 2-polyprenyl-3-methyl-6-methoxy-1,4-benzoquinol (DMQH2). The polypeptide is Ubiquinone/menaquinone biosynthesis C-methyltransferase UbiE (Chromobacterium violaceum (strain ATCC 12472 / DSM 30191 / JCM 1249 / CCUG 213 / NBRC 12614 / NCIMB 9131 / NCTC 9757 / MK)).